The chain runs to 95 residues: MSRICELTGKGRQVGNNVSHANNRTKRTFLPNLQNVTLISDALGKGVTLRVSTHGLRSVEHVGGLDNWLLKTKNEKLSTRALKVKREVAKKLAAA.

It belongs to the bacterial ribosomal protein bL28 family.

The protein is Large ribosomal subunit protein bL28 of Zymomonas mobilis subsp. mobilis (strain ATCC 31821 / ZM4 / CP4).